We begin with the raw amino-acid sequence, 255 residues long: Protein YIPF7 (255 aa).

The Cytoplasmic segment spans residues 1–124 (MSNLGQFDSD…ADGSIMNETD (124 aa)). The helical transmembrane segment at 125–145 (LTGPILFCMALGATLLLAGKV) threads the bilayer. A topological domain (lumenal) is located at residue Gln146. The helical transmembrane segment at 147 to 167 (FGYVYGMSAIGCLGIHALLNL) threads the bilayer. Over 168 to 180 (MSSSGVSYGCVAS) the chain is Cytoplasmic. Residues 181–201 (VLGYCLLPMVILSSCAIFFSL) form a helical membrane-spanning segment. Topologically, residues 202-204 (QGT) are lumenal. Residues 205-225 (FGTVSALVIIGWCSLSASKIF) form a helical membrane-spanning segment. Residues 226-234 (TSALAMEGQ) lie on the Cytoplasmic side of the membrane. The chain crosses the membrane as a helical span at residues 235–255 (QLLIAYPCALLYGLFALVTVF).

The protein belongs to the YIP1 family.

The protein localises to the endoplasmic reticulum membrane. Its subcellular location is the golgi apparatus. It localises to the cis-Golgi network membrane. It is found in the trans-Golgi network membrane. The chain is Protein YIPF7 (YIPF7) from Bos taurus (Bovine).